We begin with the raw amino-acid sequence, 370 residues long: 4-hydroxy-3-methylbut-2-en-1-yl diphosphate synthase (flavodoxin) (370 aa).

Residues Cys-268, Cys-271, Cys-303, and Glu-310 each coordinate [4Fe-4S] cluster.

The protein belongs to the IspG family. [4Fe-4S] cluster serves as cofactor.

It catalyses the reaction (2E)-4-hydroxy-3-methylbut-2-enyl diphosphate + oxidized [flavodoxin] + H2O + 2 H(+) = 2-C-methyl-D-erythritol 2,4-cyclic diphosphate + reduced [flavodoxin]. Its pathway is isoprenoid biosynthesis; isopentenyl diphosphate biosynthesis via DXP pathway; isopentenyl diphosphate from 1-deoxy-D-xylulose 5-phosphate: step 5/6. Converts 2C-methyl-D-erythritol 2,4-cyclodiphosphate (ME-2,4cPP) into 1-hydroxy-2-methyl-2-(E)-butenyl 4-diphosphate. This Bacillus pumilus (strain SAFR-032) protein is 4-hydroxy-3-methylbut-2-en-1-yl diphosphate synthase (flavodoxin).